A 119-amino-acid chain; its full sequence is Protein TraH (119 aa).

The disordered stretch occupies residues methionine 1 to alanine 67. A compositionally biased stretch (low complexity) spans alanine 41 to proline 54.

Functionally, the initiation process of transfer DNA synthesis requires the interaction of at least three plasmid-specific components (TraH, TraI, and TraJ) at the transfer origin resulting in the assembly of a specialized nucleoprotein complex - the relaxosome. This chain is Protein TraH (traH), found in Escherichia coli.